The following is a 544-amino-acid chain: Methionine--tRNA ligase 2 (544 aa).

Residues 10-20 (PYANGSLHLGH) carry the 'HIGH' region motif. Residues Cys141, Cys144, Cys153, and Cys156 each coordinate Zn(2+). Positions 329-333 (KLSTS) match the 'KMSKS' region motif. Position 332 (Thr332) interacts with ATP.

The protein belongs to the class-I aminoacyl-tRNA synthetase family. MetG type 1 subfamily. As to quaternary structure, monomer. Zn(2+) serves as cofactor.

Its subcellular location is the cytoplasm. The enzyme catalyses tRNA(Met) + L-methionine + ATP = L-methionyl-tRNA(Met) + AMP + diphosphate. Functionally, is required not only for elongation of protein synthesis but also for the initiation of all mRNA translation through initiator tRNA(fMet) aminoacylation. In Bacillus anthracis, this protein is Methionine--tRNA ligase 2.